A 368-amino-acid polypeptide reads, in one-letter code: Glutamate 5-kinase (368 aa).

Lysine 12 is a binding site for ATP. Residues serine 52, aspartate 139, and asparagine 151 each contribute to the substrate site. ATP contacts are provided by residues 171-172 (SD) and 213-219 (TGGMKTK). A PUA domain is found at 277-354 (KGALIIDDGA…KEIEKLLGYI (78 aa)).

Belongs to the glutamate 5-kinase family.

It localises to the cytoplasm. It carries out the reaction L-glutamate + ATP = L-glutamyl 5-phosphate + ADP. It participates in amino-acid biosynthesis; L-proline biosynthesis; L-glutamate 5-semialdehyde from L-glutamate: step 1/2. Functionally, catalyzes the transfer of a phosphate group to glutamate to form L-glutamate 5-phosphate. This Pelagibacter ubique (strain HTCC1062) protein is Glutamate 5-kinase.